We begin with the raw amino-acid sequence, 209 residues long: Large ribosomal subunit protein uL1 (209 aa).

It belongs to the universal ribosomal protein uL1 family. In terms of assembly, part of the 50S ribosomal subunit.

Binds directly to 23S rRNA. The L1 stalk is quite mobile in the ribosome, and is involved in E site tRNA release. Its function is as follows. Protein L1 is also a translational repressor protein, it controls the translation of the L11 operon by binding to its mRNA. In Neorickettsia sennetsu (strain ATCC VR-367 / Miyayama) (Ehrlichia sennetsu), this protein is Large ribosomal subunit protein uL1 (rplA).